We begin with the raw amino-acid sequence, 503 residues long: Mitochondrial antiviral-signaling protein (503 aa).

Over 1–478 the chain is Cytoplasmic; sequence MTFAEDKTYK…HCASSMPWAK (478 aa). Residues Lys7 and Lys10 each participate in a glycyl lysine isopeptide (Lys-Gly) (interchain with G-Cter in ubiquitin) cross-link. In terms of domain architecture, CARD spans 10–77; the sequence is KYIRDNHSKF…WVEVFIRALQ (68 aa). The segment at 10–77 is required for interaction with NLRX1; the sequence is KYIRDNHSKF…WVEVFIRALQ (68 aa). Residue Cys79 is the site of S-palmitoyl cysteine attachment. The interval 119 to 202 is disordered; the sequence is GPSAFAPGHN…HQEQEPELGG (84 aa). The interval 143-147 is interaction with TRAF2; that stretch reads PVQDT. A compositionally biased stretch (polar residues) spans 145 to 166; the sequence is QDTQPPESPVENSEQLLQTNSG. Residues Ser152, Ser157, Ser172, Ser186, and Ser220 each carry the phosphoserine modification. The interval 153–158 is interaction with TRAF6 1; it reads PVENSE. Over residues 178-189 the composition is skewed to polar residues; the sequence is PSPNQQALSPQP. Arg234 carries the asymmetric dimethylarginine modification. A phosphoserine mark is found at Ser251 and Ser256. A Glycyl lysine isopeptide (Lys-Gly) (interchain with G-Cter in ubiquitin) cross-link involves residue Lys302. An interaction with DHX33 region spans residues 337-503; the sequence is PSRVPASVAK…MLYRSRRLAQ (167 aa). The segment at 346 to 398 is disordered; the sequence is KAPANTIPPERNSKQAKETPEGPATKVTTGGNQTGPNSSIRSLHSGPEMSKPG. Basic and acidic residues predominate over residues 356–365; that stretch reads RNSKQAKETP. Polar residues predominate over residues 371–387; that stretch reads KVTTGGNQTGPNSSIRS. Residue Ser384 is modified to Phosphoserine. The pLxIS motif signature appears at 415–418; that stretch reads LAIS. Ser418 carries the post-translational modification Phosphoserine; by TBK1. Positions 431–436 are interaction with TRAF6 2; that stretch reads PEENEY. A disordered region spans residues 446–466; the sequence is SPSADLLGSPEPLATQQPQEE. A helical membrane pass occupies residues 479–496; the sequence is WLGATSALLAVFLAVMLY. Over 497 to 503 the chain is Mitochondrial intermembrane; that stretch reads RSRRLAQ.

Self-associates and polymerizes (via CARD domains) to form 400 nM long three-stranded helical filaments on mitochondria, filament nucleation requires interaction with RIGI whose CARD domains act as a template for filament assembly. Interacts with RIGI, IFIH1/MDA5, TRAF2, TRAF6 and C1QBP. May interact with FADD, RIPK1, IKBKE, CHUK and IKBKB. Interacts (when phosphorylated) with IRF3; following activation and phosphorylation on the pLxIS motif by TBK1, recruits IRF3. Interacts with NLRX1. Interaction with NLRX1 requires the CARD domain. Interacts with PSMA7. Interacts with TRAFD1. Interacts (via C-terminus) with PCBP2 in a complex containing MAVS/IPS1, PCBP2 and ITCH. Interacts with CYLD. Interacts with SRC. Interacts with DHX58/LGP2 and IKBKE. Interacts with STING1. Interacts with IFIT3 (via N-terminus). Interacts with TBK1 only in the presence of IFIT3. Interacts with TTLL12; the interaction prevents MAVS binding to TBK1 and IKBKE. Interacts with MUL1. Interacts with ANKRD17. Interacts with NDFIP1. Interacts with SMURF1; the interaction is mediated by NDFIP1 and leads to MAVS ubiquitination and degradation. Interacts (via C-terminus) with GPATCH3; the interaction is markedly increased upon viral infection. Directly interacts (via CARD domain) with ATG5 and ATG12, either as ATG5 and ATG12 monomers or as ATG12-ATG5 conjugates. Interacts with DHX33 (via the helicase C-terminal domain). Interacts with DDX3X (via C-terminus); this interaction may occur rapidly, but transiently after viral infection. The interaction with DDX3X potentiates MAVS-mediated IFNB induction. Conversely inhibition of this interaction prevents MAVS-mediated IFNB induction. Transiently interacts with TRAF3 early during viral infection. Interacts with CLPB. Interacts with TRAF3IP3. Interacts with TOMM70; the interaction is enhanced by virus infection. Interacts with ZNFX1. Interacts with DHX15. Interacts with N4BP3; this interaction promotes the polyubiquitination of MAVS. Interacts with TAX1BP1; this interaction induces MAVS polyubiquitination. Interacts with NLRP3; promoting NLRP3 recruitment to mitochondria and activation of the NLRP3 inflammasome. Interacts with ECSIT; this interaction bridges RIGI to the MAVS complex at the mitochondrion. Interacts with UBL7; this interaction promotes MAVS 'Lys-27'-linked ubiquitination leading to type I interferon production. Interacts (via transmembrane domain) with SMIM30/MAVI1 (via transmembrane domain); the interaction disrupts MAVS interaction with RIGI and inhibits MAVS aggregation, resulting in the repression of type I interferon signaling and innate immune responses. Post-translationally, following activation, phosphorylated by TBK1 at Ser-418 in the pLxIS motif. The phosphorylated pLxIS motif constitutes an IRF3-binding motif, leading to recruitment of the transcription factor IRF3 to induce type-I interferons and other cytokines. In terms of processing, ubiquitinated. Undergoes 'Lys-48'-linked polyubiquitination catalyzed by ITCH; ITCH-dependent polyubiquitination is mediated by the interaction with PCBP2 and leads to MAVS/IPS1 proteasomal degradation. Ubiquitinated by RNF125, leading to its degradation by the proteasome. Undergoes 'Lys-48'-linked ubiquitination catalyzed by SMURF1. Undergoes 'Lys-48'-linked ubiquitination catalyzed by MARCHF5 at Lys-7, leading to proteasomal degradation. Ubiquitinated via 'Lys-63'-linked ubiquitination at Lys-10 by TRIM31, promoting MAVS polymerization and formation of three-stranded helical filaments on mitochondria. Undergoes 'Lys-63'-linked ubiquitination leading to enhanced interaction between MAVS and TRAF2. Undergoes 'Lys-27'-linked ubiquitination by UBE2N and TRIM21 leading to enhanced interaction between MAVS and TBK1. Deubiquitinated by USP10 leading to attenuation of RIGI-mediated MAVS aggregation and production of type I interferon. Undergoes 'Lys-48'-linked polyubiquitination catalyzed by RNF115 leading to its degradation. Proteolytically cleaved by apoptotic caspases during apoptosis, leading to its inactivation. Cleavage by CASP3 during virus-induced apoptosis inactivates it, preventing cytokine overproduction. Post-translationally, palmitoylated by ZHDDC4. Palmitoylation promotes MAVS stabilization and activation by inhibiting 'Lys-48'- but facilitating 'Lys-63'-linked ubiquitination.

The protein localises to the mitochondrion outer membrane. It is found in the mitochondrion. It localises to the peroxisome. In terms of biological role, adapter required for innate immune defense against viruses. Acts downstream of DHX33, RIGI and IFIH1/MDA5, which detect intracellular dsRNA produced during viral replication, to coordinate pathways leading to the activation of NF-kappa-B, IRF3 and IRF7, and to the subsequent induction of antiviral cytokines such as IFN-beta and RANTES (CCL5). Peroxisomal and mitochondrial MAVS act sequentially to create an antiviral cellular state. Upon viral infection, peroxisomal MAVS induces the rapid interferon-independent expression of defense factors that provide short-term protection, whereas mitochondrial MAVS activates an interferon-dependent signaling pathway with delayed kinetics, which amplifies and stabilizes the antiviral response. May activate the same pathways following detection of extracellular dsRNA by TLR3. May protect cells from apoptosis. Involved in NLRP3 inflammasome activation by mediating NLRP3 recruitment to mitochondria. The protein is Mitochondrial antiviral-signaling protein of Mus musculus (Mouse).